A 676-amino-acid chain; its full sequence is E3 ubiquitin-protein ligase ICP0 (676 aa).

The RING-type zinc-finger motif lies at 13 to 52; sequence CCICLDAITGAARALPCLHAFCLACIRRWLEGRPTCPLCK. Disordered regions lie at residues 101–153, 266–517, and 555–676; these read DLTA…GGRA, HLIP…AGAQ, and AAIS…AWRQ. Over residues 123-153 the composition is skewed to gly residues; that stretch reads EAGGGAGGAEEAGEARGAGAGRAAGAAGGRA. The segment covering 286 to 303 has biased composition (acidic residues); that stretch reads SDSDSEGSEDDSWSESEE. Positions 304 to 314 are enriched in low complexity; sequence SSSGLSTSDLT. A compositionally biased stretch (acidic residues) spans 315-328; the sequence is AIDDTETEPETDAE. The segment covering 351–361 has biased composition (polar residues); it reads YVSTRGRQTPA. 2 stretches are compositionally biased toward low complexity: residues 375 to 388 and 397 to 411; these read GRAA…SSRS and LPAA…QARA. The span at 422–439 shows a compositional bias: gly residues; the sequence is GAGLGVAAGETAGWGAGS. Basic and acidic residues predominate over residues 440–450; that stretch reads EEGRGERRARL. The segment covering 474–484 has biased composition (pro residues); that stretch reads TPAPAPAPAPA. Low complexity predominate over residues 555–597; the sequence is AAISTRAPTPSPAGRAPAADPRRAGAPALAGAARAEVGRNGNP.

It belongs to the simplexviruses ICp0 family. In terms of processing, auto-ubiquitinated. Transactivation activity is possibly regulated through phosphorylation by casein kinase II.

It catalyses the reaction S-ubiquitinyl-[E2 ubiquitin-conjugating enzyme]-L-cysteine + [acceptor protein]-L-lysine = [E2 ubiquitin-conjugating enzyme]-L-cysteine + N(6)-ubiquitinyl-[acceptor protein]-L-lysine.. Evades nuclear antiviral defenses triggered by dsDNA viruses. Acts during the initial stages of lytic infection and the reactivation of latent viral genome. Prevents the antiviral effect of nuclear bodies by degrading host PML and SP100. In Bovine herpesvirus 1.1 (strain Cooper) (BoHV-1), this protein is E3 ubiquitin-protein ligase ICP0 (BICP0).